The following is a 353-amino-acid chain: UDP-3-O-acylglucosamine N-acyltransferase (353 aa).

H242 serves as the catalytic Proton acceptor.

This sequence belongs to the transferase hexapeptide repeat family. LpxD subfamily. As to quaternary structure, homotrimer.

The enzyme catalyses a UDP-3-O-[(3R)-3-hydroxyacyl]-alpha-D-glucosamine + a (3R)-hydroxyacyl-[ACP] = a UDP-2-N,3-O-bis[(3R)-3-hydroxyacyl]-alpha-D-glucosamine + holo-[ACP] + H(+). The protein operates within bacterial outer membrane biogenesis; LPS lipid A biosynthesis. Functionally, catalyzes the N-acylation of UDP-3-O-acylglucosamine using 3-hydroxyacyl-ACP as the acyl donor. Is involved in the biosynthesis of lipid A, a phosphorylated glycolipid that anchors the lipopolysaccharide to the outer membrane of the cell. The sequence is that of UDP-3-O-acylglucosamine N-acyltransferase from Pseudomonas paraeruginosa (strain DSM 24068 / PA7) (Pseudomonas aeruginosa (strain PA7)).